A 471-amino-acid polypeptide reads, in one-letter code: Transcription initiation factor TFIID subunit 7-like (471 aa).

Disordered regions lie at residues 1 to 84 (MERG…RQGT), 192 to 211 (SPEG…TGPT), and 328 to 377 (EMMG…EELE). Position 199 is a phosphoserine (serine 199). Residues 347-377 (GDDDDDEDEDDEDYGNEKEEEETDNSEEELE) are compositionally biased toward acidic residues. Residues 358 to 433 (EDYGNEKEEE…QKELLRKVEN (76 aa)) adopt a coiled-coil conformation.

It belongs to the TAF7 family. TFIID is composed of TATA binding protein (TBP) and a number of TBP-associated factors (TAFs). TAF7L may replace TAF7 in a spermatogenesis-specific form of TFIID. Interacts with TBP; the interaction occurs in a sub-population of cells (pachytene and haploid round spermatids) and is developmentally regulated through differential intracellular localization of the two proteins. Interacts with TAF1. Testis-specific (at protein level). Expressed during spermatogenesis from spermatogonia stage up to the stage of round spermatids.

The protein resides in the nucleus. It localises to the cytoplasm. Functionally, probably functions as a spermatogenesis-specific component of the DNA-binding general transcription factor complex TFIID, a multimeric protein complex that plays a central role in mediating promoter responses to various activators and repressors. May play a role in spermatogenesis. The chain is Transcription initiation factor TFIID subunit 7-like (Taf7l) from Mus musculus (Mouse).